The chain runs to 137 residues: Glutaredoxin-C9 (137 aa).

Positions 32 to 136 (GERVRMVVEE…PILKEVGALW (105 aa)) constitute a Glutaredoxin domain. Cys52 and Cys55 are disulfide-bonded. A Responsive for interaction with TGA factors motif is present at residues 134 to 137 (ALWL).

The protein belongs to the glutaredoxin family. CC-type subfamily. As to quaternary structure, interacts with TGA2 and TGA6.

The protein resides in the cytoplasm. It localises to the nucleus. Functionally, has a glutathione-disulfide oxidoreductase activity in the presence of NADPH and glutathione reductase. Reduces low molecular weight disulfides and proteins. In Arabidopsis thaliana (Mouse-ear cress), this protein is Glutaredoxin-C9 (GRXC9).